Reading from the N-terminus, the 232-residue chain is Small ribosomal subunit protein uS3 (232 aa).

The 69-residue stretch at 39–107 folds into the KH type-2 domain; it reads VRRFLEQRLK…PVHVNIEEVR (69 aa).

Belongs to the universal ribosomal protein uS3 family. In terms of assembly, part of the 30S ribosomal subunit. Forms a tight complex with proteins S10 and S14.

Binds the lower part of the 30S subunit head. Binds mRNA in the 70S ribosome, positioning it for translation. The protein is Small ribosomal subunit protein uS3 of Chromohalobacter salexigens (strain ATCC BAA-138 / DSM 3043 / CIP 106854 / NCIMB 13768 / 1H11).